Reading from the N-terminus, the 256-residue chain is MSQSILTTRIMEALAAGRKALIPFLPGGFPDKERFFDELAALDAGGADIIEIGVPFSDPVADGPVVEQASLDCLLNGTCLSWLFYELGKRKGQYRAGLVLMGYYNPFLQYGLEQLAADAADAGVSGFIVPDVPLEESGPLREALDKHGLDLIPLVGLNTSEERLAAYAQNARGYVYFVSVLGTTGMRESLPTEVKERLTAVRRIFNVPVALGFGIKSPEQLYAFGDLVDGVVFGSALIAHIKAGGTAAEFMARWRG.

Active-site proton acceptor residues include Glu-51 and Asp-62.

This sequence belongs to the TrpA family. Tetramer of two alpha and two beta chains.

The catalysed reaction is (1S,2R)-1-C-(indol-3-yl)glycerol 3-phosphate + L-serine = D-glyceraldehyde 3-phosphate + L-tryptophan + H2O. It participates in amino-acid biosynthesis; L-tryptophan biosynthesis; L-tryptophan from chorismate: step 5/5. Its function is as follows. The alpha subunit is responsible for the aldol cleavage of indoleglycerol phosphate to indole and glyceraldehyde 3-phosphate. The sequence is that of Tryptophan synthase alpha chain from Solidesulfovibrio magneticus (strain ATCC 700980 / DSM 13731 / RS-1) (Desulfovibrio magneticus).